Reading from the N-terminus, the 187-residue chain is Threonylcarbamoyl-AMP synthase (187 aa).

The region spanning 4–187 (ILTLDNAVAT…DARSGQILRD (184 aa)) is the YrdC-like domain.

Belongs to the SUA5 family. TsaC subfamily.

The protein localises to the cytoplasm. It catalyses the reaction L-threonine + hydrogencarbonate + ATP = L-threonylcarbamoyladenylate + diphosphate + H2O. In terms of biological role, required for the formation of a threonylcarbamoyl group on adenosine at position 37 (t(6)A37) in tRNAs that read codons beginning with adenine. Catalyzes the conversion of L-threonine, HCO(3)(-)/CO(2) and ATP to give threonylcarbamoyl-AMP (TC-AMP) as the acyladenylate intermediate, with the release of diphosphate. This Xanthomonas oryzae pv. oryzae (strain MAFF 311018) protein is Threonylcarbamoyl-AMP synthase.